The chain runs to 211 residues: Large ribosomal subunit protein uL3 (211 aa).

The interval 116–142 (GTSGVMKKHGFSGNRASHGVSRNHRLG) is disordered.

The protein belongs to the universal ribosomal protein uL3 family. Part of the 50S ribosomal subunit. Forms a cluster with proteins L14 and L19.

Its function is as follows. One of the primary rRNA binding proteins, it binds directly near the 3'-end of the 23S rRNA, where it nucleates assembly of the 50S subunit. The polypeptide is Large ribosomal subunit protein uL3 (Fusobacterium nucleatum subsp. nucleatum (strain ATCC 25586 / DSM 15643 / BCRC 10681 / CIP 101130 / JCM 8532 / KCTC 2640 / LMG 13131 / VPI 4355)).